A 124-amino-acid chain; its full sequence is Splicing factor 3B subunit 6-like protein (124 aa).

Positions 16-29 are interaction with pre-mRNA branch site; the sequence is EVNRVLYVRNLPFN. The region spanning 19–94 is the RRM domain; the sequence is RVLYVRNLPF…RYLIVLYYQH (76 aa).

It is found in the nucleus. In terms of biological role, may be necessary for the splicing of pre-mRNA. The sequence is that of Splicing factor 3B subunit 6-like protein from Arabidopsis thaliana (Mouse-ear cress).